Here is a 305-residue protein sequence, read N- to C-terminus: Putative S-adenosyl-L-methionine-dependent methyltransferase MAB_4607c (305 aa).

S-adenosyl-L-methionine is bound by residues D128 and 155 to 156 (DL).

This sequence belongs to the UPF0677 family.

Exhibits S-adenosyl-L-methionine-dependent methyltransferase activity. The protein is Putative S-adenosyl-L-methionine-dependent methyltransferase MAB_4607c of Mycobacteroides abscessus (strain ATCC 19977 / DSM 44196 / CCUG 20993 / CIP 104536 / JCM 13569 / NCTC 13031 / TMC 1543 / L948) (Mycobacterium abscessus).